The chain runs to 502 residues: Glycerol kinase (502 aa).

Thr-13 serves as a coordination point for ADP. ATP contacts are provided by Thr-13, Thr-14, and Ser-15. Residue Thr-13 participates in sn-glycerol 3-phosphate binding. Arg-17 contacts ADP. Sn-glycerol 3-phosphate-binding residues include Arg-83, Glu-84, Tyr-135, and Asp-245. Positions 83, 84, 135, 245, and 246 each coordinate glycerol. Thr-267 and Gly-310 together coordinate ADP. ATP contacts are provided by Thr-267, Gly-310, Gln-314, and Gly-411. 2 residues coordinate ADP: Gly-411 and Asn-415.

Belongs to the FGGY kinase family. Homotetramer and homodimer (in equilibrium).

The enzyme catalyses glycerol + ATP = sn-glycerol 3-phosphate + ADP + H(+). The protein operates within polyol metabolism; glycerol degradation via glycerol kinase pathway; sn-glycerol 3-phosphate from glycerol: step 1/1. With respect to regulation, activated by phosphorylation and inhibited by fructose 1,6-bisphosphate (FBP). Functionally, key enzyme in the regulation of glycerol uptake and metabolism. Catalyzes the phosphorylation of glycerol to yield sn-glycerol 3-phosphate. This is Glycerol kinase from Lactobacillus delbrueckii subsp. bulgaricus (strain ATCC BAA-365 / Lb-18).